The chain runs to 428 residues: Probable mannosyltransferase YUR1 (428 aa).

Residues 1 to 3 (MAK) lie on the Cytoplasmic side of the membrane. A helical; Signal-anchor for type II membrane protein transmembrane segment spans residues 4 to 24 (GGSLYIVGIFLPIWTFMIYIF). The interval 25 to 88 (GKELFLIRKY…TRQNDSDSFH (64 aa)) is stem region. At 25–428 (GKELFLIRKY…YFLKEEQDEI (404 aa)) the chain is on the lumenal side. 4 N-linked (GlcNAc...) asparagine glycosylation sites follow: Asn77, Asn82, Asn92, and Asn167. The segment at 89–428 (LRENATILML…YFLKEEQDEI (340 aa)) is catalytic. Glu313 functions as the Nucleophile in the catalytic mechanism. Residue Asn414 is glycosylated (N-linked (GlcNAc...) asparagine).

Belongs to the glycosyltransferase 15 family.

The protein resides in the golgi apparatus membrane. It participates in protein modification; protein glycosylation. Possible glycosyltransferase involved in N-linked glycosylation. Transfers an alpha-D-mannosyl residue from GDP-mannose into lipid-linked oligosaccharide, forming an alpha-(1-&gt;2)-D-mannosyl-D-mannose linkage. This chain is Probable mannosyltransferase YUR1 (YUR1), found in Saccharomyces cerevisiae (strain ATCC 204508 / S288c) (Baker's yeast).